The following is a 319-amino-acid chain: Formimidoylglutamase (319 aa).

Residues H131, D154, H156, D158, C248, and D250 each coordinate Mn(2+).

The protein belongs to the arginase family. Requires Mn(2+) as cofactor.

The catalysed reaction is N-formimidoyl-L-glutamate + H2O = formamide + L-glutamate. The protein operates within amino-acid degradation; L-histidine degradation into L-glutamate; L-glutamate from N-formimidoyl-L-glutamate (hydrolase route): step 1/1. Catalyzes the conversion of N-formimidoyl-L-glutamate to L-glutamate and formamide. This is Formimidoylglutamase from Legionella pneumophila (strain Paris).